Consider the following 479-residue polypeptide: Lincomycin resistance protein LmrB (479 aa).

The next 14 membrane-spanning stretches (helical) occupy residues Met19–Thr41, Trp56–Trp78, Phe85–Phe107, Arg112–Phe134, Ala141–Phe160, Trp170–Met192, Val205–Phe222, Trp232–Phe251, Met272–Leu294, Leu304–Val326, Trp338–Ser355, Thr360–Met382, Ile403–Ala425, and Ala449–Phe471.

This sequence belongs to the major facilitator superfamily. EmrB family.

The protein resides in the cell membrane. Proton-dependent transporter. May mediate the efflux of lincomycin. This chain is Lincomycin resistance protein LmrB (lmrB), found in Bacillus subtilis (strain 168).